The primary structure comprises 889 residues: Translation initiation factor IF-2 (889 aa).

Disordered regions lie at residues 47-85 (GHLK…AKSV) and 206-302 (AEAA…FTKP). Basic and acidic residues-rich tracts occupy residues 52–61 (QHGDESEAKP), 214–241 (AAKK…KEVV), and 252–263 (AEDKSDSADESG). The 170-residue stretch at 389–558 (TRAPVVTIMG…LLQSEVLELT (170 aa)) folds into the tr-type G domain. The segment at 398–405 (GHVDHGKT) is G1. Residue 398 to 405 (GHVDHGKT) participates in GTP binding. Positions 423-427 (GITQH) are G2. The G3 stretch occupies residues 444–447 (DTPG). Residues 444–448 (DTPGH) and 498–501 (NKMD) each bind GTP. A G4 region spans residues 498 to 501 (NKMD). The G5 stretch occupies residues 534–536 (SAK).

Belongs to the TRAFAC class translation factor GTPase superfamily. Classic translation factor GTPase family. IF-2 subfamily.

It localises to the cytoplasm. Its function is as follows. One of the essential components for the initiation of protein synthesis. Protects formylmethionyl-tRNA from spontaneous hydrolysis and promotes its binding to the 30S ribosomal subunits. Also involved in the hydrolysis of GTP during the formation of the 70S ribosomal complex. The chain is Translation initiation factor IF-2 from Colwellia psychrerythraea (strain 34H / ATCC BAA-681) (Vibrio psychroerythus).